The chain runs to 314 residues: 2-dehydro-3-deoxygluconokinase (314 aa).

Substrate-binding positions include 28–32 (GDTLN), tyrosine 88, 102–104 (YWR), and arginine 170. Residues 168-170 (NYR), 228-233 (KCGKNG), and 260-263 (SAGD) contribute to the ATP site. Residue aspartate 263 participates in substrate binding. The active-site Proton acceptor is the aspartate 263.

The protein belongs to the carbohydrate kinase PfkB family.

It carries out the reaction 2-dehydro-3-deoxy-D-gluconate + ATP = 2-dehydro-3-deoxy-6-phospho-D-gluconate + ADP + H(+). The protein operates within carbohydrate acid metabolism; 2-dehydro-3-deoxy-D-gluconate degradation; D-glyceraldehyde 3-phosphate and pyruvate from 2-dehydro-3-deoxy-D-gluconate: step 1/2. Its function is as follows. Catalyzes the phosphorylation of 2-keto-3-deoxygluconate (KDG) to produce 2-keto-3-deoxy-6-phosphogluconate (KDPG). The chain is 2-dehydro-3-deoxygluconokinase (kdgK) from Haemophilus influenzae (strain ATCC 51907 / DSM 11121 / KW20 / Rd).